Consider the following 578-residue polypeptide: MNLPAVLNGLLVSVVAALLWKYVRLVEHTSQLEEELQLTRQSQEFSQVRIDYHGALLALQEHGTRMVCTGKMHTDRICRFDYLCYCTEAEEFVFFHSNASVMLPNLGSRRFQPALLDLSSVEDHNTQYFNFLELPAAALKFMPKPVFVPDVTLILNRFNPDNLMHIFHDDLLPVYYTMQQYSDLDDEARLVFMEGWGEGAHFDLYRLLSSKQPLLKDQLKTFGKLMCFTKSYVGLSKMTTWYQYGFVQPQGPKANILISGNEIRQFASFLMERLNITREEEEEDDDYIVVFKRTTNRLILNEAELLLALAQEFQMRTVTVSLEEQSFDNIIQIISRAAMLVSMHGAQMITSMFLPRGAAVVELFPYGVNPEQYTPYKTLASLPGMDLQYVAWRNTMEENTVTFPDRPWDQGGIVHLEKEEQERILASKEVPRHLCCRNPEWLFRIYQDTTVDLASFLDVLRDGLKKLNLKKAKVASTVHPGRVREPKCQTSVQATNEAKLSVSWQIPWNLKYLKVKEVKYEVWIQEQGENTYMPYILPHQNYTFSENIKPFTTYLVWVRCIFNKNLLGPFADVLICKT.

Over 1–4 the chain is Cytoplasmic; the sequence is MNLP. A helical; Signal-anchor for type II membrane protein membrane pass occupies residues 5-25; that stretch reads AVLNGLLVSVVAALLWKYVRL. At 26 to 578 the chain is on the lumenal side; it reads VEHTSQLEEE…PFADVLICKT (553 aa). Residues N98, N275, and N541 are each glycosylated (N-linked (GlcNAc...) asparagine). One can recognise a Fibronectin type-III domain in the interval 482-578; sequence RVREPKCQTS…PFADVLICKT (97 aa).

This sequence belongs to the glycosyltransferase 61 family.

The protein localises to the endoplasmic reticulum membrane. It carries out the reaction 3-O-(alpha-D-mannosyl)-L-threonyl-[protein] + UDP-N-acetyl-alpha-D-glucosamine = 3-O-(N-acetyl-beta-D-glucosaminyl-(1-&gt;4)-alpha-D-mannosyl)-L-threonyl-[protein] + UDP + H(+). The protein operates within protein modification; protein glycosylation. In terms of biological role, O-linked mannose beta-1,4-N-acetylglucosaminyltransferase that transfers UDP-N-acetyl-D-glucosamine to the 4-position of the mannose to generate N-acetyl-D-glucosamine-beta-1,4-O-D-mannosylprotein. Involved in the biosynthesis of the phosphorylated O-mannosyl trisaccharide (N-acetylgalactosamine-beta-3-N-acetylglucosamine-beta-4-(phosphate-6-)mannose), a carbohydrate structure present in alpha-dystroglycan (DAG1), which is required for binding laminin G-like domain-containing extracellular proteins with high affinity. The sequence is that of Protein O-linked-mannose beta-1,4-N-acetylglucosaminyltransferase 2 (pomgnt2) from Danio rerio (Zebrafish).